Here is a 724-residue protein sequence, read N- to C-terminus: MTLDERDLELIREELGRDPNATERAMFENMWSEHCAYRSTRHLLRQLPSEADHVIVGPGDDAAVVAIDDEWAVVVGIESHNHPSYVDPYNGAATGVGGIVRDVLSMGAFPIALLDPLRFGPLDGERVPYLVDGVVRGISDYGNRIGVPTVGGELEFDPSYERNPLVNVMCVGIVRRSEIVRGRADRPGDVLVLVGARTGRDGIGGAAFASEELGEESEEEDRPAVQIGDPFTERQLIIAIREAVERGLVKGCKDLGAAGLTCAATEMAADGGTGVEIDVFKVPLREEGMEPWEIMLSESQERMLLVVAPEDVDEVIEICRKYGLEASVVGRVTDDGYLTVKDGDDVIARVPAEFLADGAPEVEWEEEPYSYPENVDVPEPDPEDLVRSVLSSPNVSPALREWVYRQYDHEVQGRTVVKPGHDAAVMWLQHEGLEDVALALTTDSNPRHVLIDPKTGTEGCVAEALRNLATVGAEPLCLVDCLNFGSPENPRVYYQLRRSIEGLGKAAREFEVPVVGGNVSLYNEHEVDGPVNPTPVIGAVGVIRGLDYLEDFPREPEEGEAVIVLGETREELGGSLYLIEYHGIKGGKVPRVRYREERALHDLLRRIARKNMVSSVTDVSTGGLLAAVAELLGPVGASLSLSEVPNSVSRWDFLLLSESHGRAIVTTDRPDDVLGAAEEAGVPAQVVGEVTGDGVLRISVGPVDVSLDREELEELWRSPLHYLE.

The active site involves H34. Y37 is an ATP binding site. E78 lines the Mg(2+) pocket. Residues 79 to 82 (SHNH) and R101 contribute to the substrate site. Residue H80 is the Proton acceptor of the active site. D102 contacts Mg(2+). Residue Q226 coordinates substrate. Position 254 (D254) interacts with Mg(2+). A substrate-binding site is contributed by 298–300 (ESQ). 2 residues coordinate ATP: D480 and G517. Residue N518 participates in Mg(2+) binding. S520 contributes to the substrate binding site.

The protein belongs to the FGAMS family. Monomer. Part of the FGAM synthase complex composed of 1 PurL, 1 PurQ and 2 PurS subunits.

It is found in the cytoplasm. It catalyses the reaction N(2)-formyl-N(1)-(5-phospho-beta-D-ribosyl)glycinamide + L-glutamine + ATP + H2O = 2-formamido-N(1)-(5-O-phospho-beta-D-ribosyl)acetamidine + L-glutamate + ADP + phosphate + H(+). Its pathway is purine metabolism; IMP biosynthesis via de novo pathway; 5-amino-1-(5-phospho-D-ribosyl)imidazole from N(2)-formyl-N(1)-(5-phospho-D-ribosyl)glycinamide: step 1/2. Its function is as follows. Part of the phosphoribosylformylglycinamidine synthase complex involved in the purines biosynthetic pathway. Catalyzes the ATP-dependent conversion of formylglycinamide ribonucleotide (FGAR) and glutamine to yield formylglycinamidine ribonucleotide (FGAM) and glutamate. The FGAM synthase complex is composed of three subunits. PurQ produces an ammonia molecule by converting glutamine to glutamate. PurL transfers the ammonia molecule to FGAR to form FGAM in an ATP-dependent manner. PurS interacts with PurQ and PurL and is thought to assist in the transfer of the ammonia molecule from PurQ to PurL. This is Phosphoribosylformylglycinamidine synthase subunit PurL from Methanopyrus kandleri (strain AV19 / DSM 6324 / JCM 9639 / NBRC 100938).